The sequence spans 256 residues: MNDIWWQTYGEGNCHLVLLHGWGLNAEVWHCIREELGSHFTLHLVDLPGYGRSSGFGAMTLEEMTAQVAKNAPDQAIWLGWSLGGLVASQMALTHPERVQALVTVASSPCFSAREGWPGIKPEILGGFQQQLSDDFQRTVERFLALQTLGTETARQDARTLKSVVLAQPMPDVEVLNGGLEILKTVDLREALKNVNMPFLRLYGYLDGLVPRKMVPLLDTLWPHSTSQIMAKAAHAPFISHPAAFCQALMTLKSSL.

Residues 15 to 242 (HLVLLHGWGL…AAHAPFISHP (228 aa)) form the AB hydrolase-1 domain. Substrate is bound by residues tryptophan 22, 82-83 (SL), and 143-147 (FLALQ). Serine 82 functions as the Nucleophile in the catalytic mechanism. Residues aspartate 207 and histidine 235 contribute to the active site. Histidine 235 contributes to the substrate binding site.

The protein belongs to the AB hydrolase superfamily. Carboxylesterase BioH family. In terms of assembly, monomer.

Its subcellular location is the cytoplasm. It carries out the reaction 6-carboxyhexanoyl-[ACP] methyl ester + H2O = 6-carboxyhexanoyl-[ACP] + methanol + H(+). It participates in cofactor biosynthesis; biotin biosynthesis. In terms of biological role, the physiological role of BioH is to remove the methyl group introduced by BioC when the pimeloyl moiety is complete. It allows to synthesize pimeloyl-ACP via the fatty acid synthetic pathway through the hydrolysis of the ester bonds of pimeloyl-ACP esters. This is Pimeloyl-[acyl-carrier protein] methyl ester esterase from Salmonella agona (strain SL483).